The following is a 429-amino-acid chain: Ribosomal RNA small subunit methyltransferase B (429 aa).

S-adenosyl-L-methionine-binding positions include 254–260, aspartate 277, aspartate 303, and aspartate 322; that span reads CAAPGGK. Cysteine 375 acts as the Nucleophile in catalysis.

It belongs to the class I-like SAM-binding methyltransferase superfamily. RsmB/NOP family.

The protein localises to the cytoplasm. The enzyme catalyses cytidine(967) in 16S rRNA + S-adenosyl-L-methionine = 5-methylcytidine(967) in 16S rRNA + S-adenosyl-L-homocysteine + H(+). Functionally, specifically methylates the cytosine at position 967 (m5C967) of 16S rRNA. The protein is Ribosomal RNA small subunit methyltransferase B of Yersinia pseudotuberculosis serotype O:1b (strain IP 31758).